We begin with the raw amino-acid sequence, 447 residues long: Putative metabolite transport protein HI_0418 (447 aa).

Residues 1–28 are Cytoplasmic-facing; that stretch reads MCKPQQKHYGRQVMNTQNSLKQVATATM. A helical transmembrane segment spans residues 29–49; sequence VGTAIEYFDNYIYAMAAVLVF. Residues 50-63 lie on the Periplasmic side of the membrane; that stretch reads NHQFFHAVDPLSGQ. The helical transmembrane segment at 64-84 threads the bilayer; the sequence is IAALSTLALTFIARPLGAILF. Topologically, residues 85 to 96 are cytoplasmic; the sequence is GHFGDRFGRKNT. The chain crosses the membrane as a helical span at residues 97–117; that stretch reads FVMSLLLMGISTVVIGLLPTY. The Periplasmic portion of the chain corresponds to 118-119; the sequence is DS. Residues 120-140 form a helical membrane-spanning segment; sequence IGIWATILLCLCRIGQGIGLG. Topologically, residues 141–167 are cytoplasmic; the sequence is GEWGGAALVAVENAPEGKRGWYGTFPQ. Residues 168–188 traverse the membrane as a helical segment; the sequence is LGAPLGLLLANGVFLGITAIF. Over 189 to 194 the chain is Periplasmic; the sequence is GQEAMT. The helical transmembrane segment at 195–215 threads the bilayer; sequence EWAWRIPFLSSVILVAIGLYV. Topologically, residues 216 to 249 are cytoplasmic; sequence RLKLTEAPIFLAALNKPKPKRLPMLEVVTTHFKP. The helical transmembrane segment at 250–270 threads the bilayer; it reads FFLGMLVCIAGYVLFYIMIAF. The Periplasmic segment spans residues 271–295; it reads SQIYAKSAPTVSEAGYAMGLGFSPQ. Residues 296 to 316 form a helical membrane-spanning segment; the sequence is IFTALLMASAVSLAITIAASG. The Cytoplasmic portion of the chain corresponds to 317–325; the sequence is KYIDKIGRR. A helical membrane pass occupies residues 326-346; the sequence is TWLIWTTVGVAIFGLSLPLFL. Topologically, residues 347–354 are periplasmic; the sequence is ENGTTTSL. The chain crosses the membrane as a helical span at residues 355–375; sequence FWFLFIGMGLIGMGYGPLASF. Residues 376 to 390 lie on the Cytoplasmic side of the membrane; sequence LPELFPTHARYSGAS. The chain crosses the membrane as a helical span at residues 391-411; it reads LTYNIAGLFGASVAAIIALPL. Residues 412-418 are Periplasmic-facing; that stretch reads NAHYGLK. The chain crosses the membrane as a helical span at residues 419–439; that stretch reads GVGIYLTLNAVLSLVGLWFIS. The Cytoplasmic segment spans residues 440–447; sequence ETKDKLLS.

This sequence belongs to the major facilitator superfamily. Metabolite:H+ Symporter (MHS) family (TC 2.A.1.6) family.

The protein localises to the cell inner membrane. The polypeptide is Putative metabolite transport protein HI_0418 (Haemophilus influenzae (strain ATCC 51907 / DSM 11121 / KW20 / Rd)).